A 194-amino-acid polypeptide reads, in one-letter code: MSPFSIVLIGFAMSTDAFAAAIGKGAAMRKPQWRDALRAGLIFGCIEAITPVIGWLLGRAASSYVSAYDHWIAFVLLGALGTHMIVAGLRNGPEEAEDAASDTPKRHGVLGLATTGFATSIDAMAVGVSLAFLDVHIGVVAVVVGLCTFSMVTAGVMLGRALGNLIGKRAEMLGGLILVIVGSVILYEHLSGAA.

The next 6 helical transmembrane spans lie at 3–23 (PFSI…AAIG), 37–57 (LRAG…GWLL), 69–89 (DHWI…VAGL), 110–132 (LGLA…SLAF), 147–167 (CTFS…NLIG), and 172–192 (MLGG…HLSG).

Belongs to the MntP (TC 9.B.29) family.

The protein localises to the cell inner membrane. Probably functions as a manganese efflux pump. The polypeptide is Putative manganese efflux pump MntP (Xanthomonas euvesicatoria pv. vesicatoria (strain 85-10) (Xanthomonas campestris pv. vesicatoria)).